We begin with the raw amino-acid sequence, 239 residues long: Probable transcriptional regulatory protein BCAH187_A0615 (239 aa).

The protein belongs to the TACO1 family. YeeN subfamily.

It is found in the cytoplasm. This chain is Probable transcriptional regulatory protein BCAH187_A0615, found in Bacillus cereus (strain AH187).